Consider the following 116-residue polypeptide: Small ribosomal subunit protein bS16 (116 aa).

The protein belongs to the bacterial ribosomal protein bS16 family.

The chain is Small ribosomal subunit protein bS16 from Chlamydia muridarum (strain MoPn / Nigg).